A 173-amino-acid chain; its full sequence is Translation initiation factor IF-3 (173 aa).

The protein belongs to the IF-3 family. Monomer.

It localises to the cytoplasm. In terms of biological role, IF-3 binds to the 30S ribosomal subunit and shifts the equilibrium between 70S ribosomes and their 50S and 30S subunits in favor of the free subunits, thus enhancing the availability of 30S subunits on which protein synthesis initiation begins. The chain is Translation initiation factor IF-3 from Parvibaculum lavamentivorans (strain DS-1 / DSM 13023 / NCIMB 13966).